Here is a 172-residue protein sequence, read N- to C-terminus: MPRSRINGNFIDKTSSIVANILLQIIPTTSGEKRAFTYYRDGAIMLAQSEGNYAEALQNYYEATRLEIDPYDRSYILYNIGLIHTSNGEHTKALEYYFRALERNPFLPQAFNNMAVICHYRGEQAILQGDSEIAEAWFDQAAEYWKQAIALTPGNYIEAQNWLKITKRFEFE.

TPR repeat units follow at residues 35–70 (AFTY…EIDP), 74–107 (SYIL…NPFL), and 122–155 (GEQA…TPGN).

It belongs to the Ycf3 family.

It localises to the plastid. The protein resides in the chloroplast thylakoid membrane. Functionally, essential for the assembly of the photosystem I (PSI) complex. May act as a chaperone-like factor to guide the assembly of the PSI subunits. The sequence is that of Photosystem I assembly protein Ycf3 from Sorghum bicolor (Sorghum).